Here is a 103-residue protein sequence, read N- to C-terminus: Integration host factor subunit alpha (103 aa).

Residues 50–72 (GNFNLRDKGERPGRNPKTGEEIP) form a disordered region. A compositionally biased stretch (basic and acidic residues) spans 54–69 (LRDKGERPGRNPKTGE).

It belongs to the bacterial histone-like protein family. In terms of assembly, heterodimer of an alpha and a beta chain.

In terms of biological role, this protein is one of the two subunits of integration host factor, a specific DNA-binding protein that functions in genetic recombination as well as in transcriptional and translational control. The sequence is that of Integration host factor subunit alpha from Coxiella burnetii (strain CbuK_Q154) (Coxiella burnetii (strain Q154)).